The primary structure comprises 377 residues: Glutamate 5-kinase (377 aa).

Residue Lys-20 participates in ATP binding. Substrate-binding residues include Ser-60, Asp-147, and Asn-159. Residue 179-180 (SD) participates in ATP binding. A PUA domain is found at 281-355 (HGQLHLDAGA…GQSTSDLPEF (75 aa)).

The protein belongs to the glutamate 5-kinase family.

The protein resides in the cytoplasm. It catalyses the reaction L-glutamate + ATP = L-glutamyl 5-phosphate + ADP. Its pathway is amino-acid biosynthesis; L-proline biosynthesis; L-glutamate 5-semialdehyde from L-glutamate: step 1/2. Its function is as follows. Catalyzes the transfer of a phosphate group to glutamate to form L-glutamate 5-phosphate. The sequence is that of Glutamate 5-kinase from Corynebacterium jeikeium (strain K411).